Consider the following 306-residue polypeptide: Phospho-N-acetylmuramoyl-pentapeptide-transferase (306 aa).

The next 10 helical transmembrane spans lie at 1–21, 49–69, 75–95, 104–124, 130–150, 160–180, 182–202, 209–229, 234–254, and 284–304; these read MDIYSAATLLAEFVLGIIIFP, GTPTAGGIVFISLTVIAGLIL, LIFTLLFYGFIGFLDDFVSIV, AWQKLALQFLFSIWIAYTILQ, IFGITVPSWLFYLFTMLLVSG, GIDGLAGWVFVTSMIPFMFFS, SSMEYKAIFVIIMPLLSFLVY, VFMGDTGSLALGAYISTYALM, LSLLFFTPIFLLETISVILQV, and IVGVFSAWNLAIAIFYIAFFL.

It belongs to the glycosyltransferase 4 family. MraY subfamily. Requires Mg(2+) as cofactor.

It localises to the cell inner membrane. It catalyses the reaction UDP-N-acetyl-alpha-D-muramoyl-L-alanyl-gamma-D-glutamyl-meso-2,6-diaminopimeloyl-D-alanyl-D-alanine + di-trans,octa-cis-undecaprenyl phosphate = di-trans,octa-cis-undecaprenyl diphospho-N-acetyl-alpha-D-muramoyl-L-alanyl-D-glutamyl-meso-2,6-diaminopimeloyl-D-alanyl-D-alanine + UMP. Its pathway is cell wall biogenesis; peptidoglycan biosynthesis. In terms of biological role, catalyzes the initial step of the lipid cycle reactions in the biosynthesis of the cell wall peptidoglycan: transfers peptidoglycan precursor phospho-MurNAc-pentapeptide from UDP-MurNAc-pentapeptide onto the lipid carrier undecaprenyl phosphate, yielding undecaprenyl-pyrophosphoryl-MurNAc-pentapeptide, known as lipid I. The polypeptide is Phospho-N-acetylmuramoyl-pentapeptide-transferase (Fervidobacterium nodosum (strain ATCC 35602 / DSM 5306 / Rt17-B1)).